A 358-amino-acid chain; its full sequence is Homoserine O-succinyltransferase (358 aa).

Cysteine 146 (acyl-thioester intermediate) is an active-site residue. The substrate site is built by lysine 167 and serine 196. Histidine 239 functions as the Proton acceptor in the catalytic mechanism. The active site involves glutamate 241. Substrate is bound at residue arginine 253.

This sequence belongs to the MetA family.

It localises to the cytoplasm. It catalyses the reaction L-homoserine + succinyl-CoA = O-succinyl-L-homoserine + CoA. It participates in amino-acid biosynthesis; L-methionine biosynthesis via de novo pathway; O-succinyl-L-homoserine from L-homoserine: step 1/1. Transfers a succinyl group from succinyl-CoA to L-homoserine, forming succinyl-L-homoserine. This is Homoserine O-succinyltransferase from Nitrosococcus oceani (strain ATCC 19707 / BCRC 17464 / JCM 30415 / NCIMB 11848 / C-107).